The chain runs to 94 residues: Small ribosomal subunit protein uS19 (94 aa).

It belongs to the universal ribosomal protein uS19 family.

In terms of biological role, protein S19 forms a complex with S13 that binds strongly to the 16S ribosomal RNA. The polypeptide is Small ribosomal subunit protein uS19 (Anaplasma phagocytophilum (strain HZ)).